We begin with the raw amino-acid sequence, 305 residues long: Peroxidase A2 (305 aa).

Residue Gln-1 is modified to Pyrrolidone carboxylic acid. N-linked (GlcNAc...) asparagine glycans are attached at residues Asn-3 and Asn-13. Disulfide bonds link Cys-11/Cys-91, Cys-44/Cys-49, Cys-97/Cys-299, and Cys-176/Cys-208. The Proton acceptor role is filled by His-42. Ca(2+) contacts are provided by Asp-43, Val-46, Gly-48, Asp-50, and Ser-52. Pro-139 lines the substrate pocket. N-linked (GlcNAc...) asparagine glycosylation is present at Asn-147. A heme b-binding site is contributed by His-169. Thr-170 provides a ligand contact to Ca(2+). N-linked (GlcNAc...) asparagine glycosylation is found at Asn-185, Asn-197, and Asn-211. Residues Asp-221, Thr-224, and Asp-229 each coordinate Ca(2+). The N-linked (GlcNAc...) asparagine glycan is linked to Asn-267.

The protein belongs to the peroxidase family. Classical plant (class III) peroxidase subfamily. Ca(2+) serves as cofactor. Heme b is required as a cofactor.

It carries out the reaction 2 a phenolic donor + H2O2 = 2 a phenolic radical donor + 2 H2O. Removal of H(2)O(2), oxidation of toxic reductants, biosynthesis and degradation of lignin, suberization, auxin catabolism, response to environmental stresses such as wounding, pathogen attack and oxidative stress. These functions might be dependent on each isozyme/isoform in each plant tissue. This Armoracia rusticana (Horseradish) protein is Peroxidase A2 (HRPA2).